A 102-amino-acid chain; its full sequence is MANEKIRIRLKAYDHRVLDQSAEKIVDTAKRSGAKVSGPIPLPTEKSIYTILRAVHKYKDAREQFEMRTHKRLIDIVNPTPKTVDALMRLELPSGVDIEIKL.

The protein belongs to the universal ribosomal protein uS10 family. In terms of assembly, part of the 30S ribosomal subunit.

In terms of biological role, involved in the binding of tRNA to the ribosomes. The polypeptide is Small ribosomal subunit protein uS10 (Exiguobacterium sp. (strain ATCC BAA-1283 / AT1b)).